Consider the following 213-residue polypeptide: Heat shock protein 27 (213 aa).

S58 and S75 each carry phosphoserine. The sHSP domain maps to 71–182 (SRRASGGPNA…SERIVQIQQT (112 aa)). The segment at 157–213 (VLTLKAPPPPSKEQAKSERIVQIQQTGPAHLSVKAPAPEAGDGKAENGSGEKMETSK) is disordered. Residues 197-213 (GDGKAENGSGEKMETSK) are compositionally biased toward basic and acidic residues.

Belongs to the small heat shock protein (HSP20) family.

This chain is Heat shock protein 27 (Hsp27), found in Drosophila melanogaster (Fruit fly).